A 416-amino-acid chain; its full sequence is Isobutyryl-CoA dehydrogenase, mitochondrial (416 aa).

The N-terminal 21 residues, 1-21, are a transit peptide targeting the mitochondrion; it reads MISGLFKLSNKQSVLQNATKL. FAD is bound by residues 156–165 and 189–191; these read YCLTEPGSGS and FIS. Ser-165 serves as a coordination point for substrate. Substrate is bound at residue 273–276; the sequence is NGGR. FAD-binding positions include Arg-301, 311–312, and 370–374; these read FQ and QLFGG. Glu-397 functions as the Proton acceptor in the catalytic mechanism. FAD is bound at residue 399 to 401; sequence SDA. A substrate-binding site is contributed by Arg-409.

The protein belongs to the acyl-CoA dehydrogenase family. As to quaternary structure, homotetramer. Requires FAD as cofactor.

It localises to the mitochondrion. The catalysed reaction is 2-methylpropanoyl-CoA + oxidized [electron-transfer flavoprotein] + H(+) = 2-methylpropenoyl-CoA + reduced [electron-transfer flavoprotein]. The enzyme catalyses (2S)-2-methylbutanoyl-CoA + oxidized [electron-transfer flavoprotein] + H(+) = (2E)-2-methylbut-2-enoyl-CoA + reduced [electron-transfer flavoprotein]. It catalyses the reaction propanoyl-CoA + oxidized [electron-transfer flavoprotein] + H(+) = acryloyl-CoA + reduced [electron-transfer flavoprotein]. It participates in amino-acid degradation; L-valine degradation. In terms of biological role, isobutyryl-CoA dehydrogenase which catalyzes one of the steps of the valine catabolic pathway. To a lesser extent, is also able to catalyze the oxidation of (2S)-2-methylbutanoyl-CoA. This Dictyostelium discoideum (Social amoeba) protein is Isobutyryl-CoA dehydrogenase, mitochondrial (acad8).